Consider the following 297-residue polypeptide: Rhomboid-type serine protease 2 (297 aa).

6 helical membrane passes run 14–34, 60–80, 98–118, 120–140, 155–175, and 179–199; these read IQHP…IFLL, ISFY…LVAL, IVLN…SIGF, PDEA…YWAI, LVVP…IVIP, and FIGH…YLDV. The Nucleophile role is filled by S128. The active site involves H182. A disordered region spans residues 268–297; it reads DLEAGTRSRGNSSVDPTTSFPGTGQTLGTQ. Residues 275 to 297 are compositionally biased toward polar residues; sequence SRGNSSVDPTTSFPGTGQTLGTQ.

The protein belongs to the peptidase S54 family.

The protein localises to the golgi apparatus membrane. Its subcellular location is the golgi apparatus. It localises to the cis-Golgi network membrane. It carries out the reaction Cleaves type-1 transmembrane domains using a catalytic dyad composed of serine and histidine that are contributed by different transmembrane domains.. Functionally, probable rhomboid-type serine protease that catalyzes intramembrane proteolysis. The polypeptide is Rhomboid-type serine protease 2 (RBD2) (Yarrowia lipolytica (strain CLIB 122 / E 150) (Yeast)).